Consider the following 120-residue polypeptide: Large ribosomal subunit protein uL24 (120 aa).

The disordered stretch occupies residues 1-33 (MTRQPHKQRNRQERAALHEKQKQVRAPLSPELR). The segment covering 10–22 (NRQERAALHEKQK) has biased composition (basic and acidic residues).

Belongs to the universal ribosomal protein uL24 family. Part of the 50S ribosomal subunit.

One of two assembly initiator proteins, it binds directly to the 5'-end of the 23S rRNA, where it nucleates assembly of the 50S subunit. Its function is as follows. Located at the polypeptide exit tunnel on the outside of the subunit. The protein is Large ribosomal subunit protein uL24 of Natronomonas pharaonis (strain ATCC 35678 / DSM 2160 / CIP 103997 / JCM 8858 / NBRC 14720 / NCIMB 2260 / Gabara) (Halobacterium pharaonis).